The sequence spans 377 residues: MLEKSGSVAETFGIPLAVLLELTHRCPLQCPYCSNPLELERGGAELSTDEWKRVLSELARIGVLQVHFSGGEPTARKDLVELVRHATEVGLYTNLITSAVLLSRERLAALADAGLAHVQISFQGSEATIADRVGGFAGGHAKKLDVARWTRELDLPLTVNAVMHRQNLHLLPDIIELALALDADRLEVANVQYYGWALKNRAALMPTLAQIEDCTATVEAARERLKGQLAIDYVIPDYYAARPKKCMGGWGRQFFNISPSGKVLPCHAAETITGLDFPSVRNGASIAEIWRSAEAFNRYRGTGWMQQPCASCAFKEIDFGGCRCQAFALAGDAAATDPACALSPLHDRIFKTAEAEAASGSDRFLYRNFAGGTVEGA.

The Radical SAM core domain occupies F12–Q228. [4Fe-4S] cluster is bound by residues C26, C30, and C33.

Belongs to the radical SAM superfamily. PqqE family. In terms of assembly, interacts with PqqD. The interaction is necessary for activity of PqqE. It depends on [4Fe-4S] cluster as a cofactor.

The catalysed reaction is [PQQ precursor protein] + S-adenosyl-L-methionine = E-Y cross-linked-[PQQ precursor protein] + 5'-deoxyadenosine + L-methionine + H(+). It participates in cofactor biosynthesis; pyrroloquinoline quinone biosynthesis. In terms of biological role, catalyzes the cross-linking of a glutamate residue and a tyrosine residue in the PqqA protein as part of the biosynthesis of pyrroloquinoline quinone (PQQ). The protein is PqqA peptide cyclase of Rhodopseudomonas palustris (strain ATCC BAA-98 / CGA009).